We begin with the raw amino-acid sequence, 106 residues long: UPF0145 protein (106 aa).

It belongs to the UPF0145 family.

The sequence is that of UPF0145 protein from Listeria grayi (Listeria murrayi).